Here is a 55-residue protein sequence, read N- to C-terminus: Cytochrome b-c1 complex subunit 9 (55 aa).

The Mitochondrial matrix portion of the chain corresponds to 1 to 15 (MKVIYNTLFKRTSTY). The chain crosses the membrane as a helical span at residues 16-41 (AVAIIASAFFFERALDVTSVAIFEGI). Residues 42–55 (NKGKLWKDIKGKYE) lie on the Chloroplast intermembrane side of the membrane.

This sequence belongs to the UQCR10/QCR9 family. As to quaternary structure, component of the ubiquinol-cytochrome c oxidoreductase (cytochrome b-c1 complex, complex III, CIII), a multisubunit enzyme composed of 3 respiratory subunits cytochrome b, cytochrome c1 and Rieske protein, 2 core protein subunits, and additional low-molecular weight protein subunits. The complex exists as an obligatory dimer and forms supercomplexes (SCs) in the inner mitochondrial membrane with cytochrome c oxidase (complex IV, CIV).

It localises to the mitochondrion inner membrane. Its function is as follows. Component of the ubiquinol-cytochrome c oxidoreductase, a multisubunit transmembrane complex that is part of the mitochondrial electron transport chain which drives oxidative phosphorylation. The respiratory chain contains 3 multisubunit complexes succinate dehydrogenase (complex II, CII), ubiquinol-cytochrome c oxidoreductase (cytochrome b-c1 complex, complex III, CIII) and cytochrome c oxidase (complex IV, CIV), that cooperate to transfer electrons derived from NADH and succinate to molecular oxygen, creating an electrochemical gradient over the inner membrane that drives transmembrane transport and the ATP synthase. The cytochrome b-c1 complex catalyzes electron transfer from ubiquinol to cytochrome c, linking this redox reaction to translocation of protons across the mitochondrial inner membrane, with protons being carried across the membrane as hydrogens on the quinol. In the process called Q cycle, 2 protons are consumed from the matrix, 4 protons are released into the intermembrane space and 2 electrons are passed to cytochrome c. This chain is Cytochrome b-c1 complex subunit 9 (ox), found in Drosophila melanogaster (Fruit fly).